The primary structure comprises 309 residues: Taste receptor type 2 member 43 (309 aa).

Residue methionine 1 is a topological domain, extracellular. The helical transmembrane segment at 2 to 22 (ITFLPIIFSSLVVVTFVIGNF) threads the bilayer. At 23–46 (ANGFIALVNSIEWFKRQKISFADQ) the chain is on the cytoplasmic side. The chain crosses the membrane as a helical span at residues 47-67 (ILTALAVSRVGLLWVLLLNWY). The Extracellular portion of the chain corresponds to 68–86 (STVLNPAFNSVEVRTTAYN). The chain crosses the membrane as a helical span at residues 87-107 (IWAVINHFSNWLATTLSIFYL). Over 108 to 126 (LKIANFSNFIFLHLKRRVK) the chain is Cytoplasmic. A helical membrane pass occupies residues 127-147 (SVILVMLLGPLLFLACHLFVI). Topologically, residues 148–178 (NMNEIVRTKEFEGNMTWKIKLKSAMYFSNMT) are extracellular. N-linked (GlcNAc...) asparagine glycosylation is found at asparagine 161 and asparagine 176. The helical transmembrane segment at 179–199 (VTMVANLVPFTLTLLSFMLLI) threads the bilayer. Over 200–229 (CSLCKHLKKMQLHGKGSQDPSTKVHIKALQ) the chain is Cytoplasmic. The helical transmembrane segment at 230–250 (TVISFLLLCAIYFLSIMISVW) threads the bilayer. Topologically, residues 251–259 (SFGSLENKP) are extracellular. A helical membrane pass occupies residues 260-280 (VFMFCKAIRFSYPSIHPFILI). At 281–309 (WGNKKLKQTFLSVFWQMRYWVKGEKTSSP) the chain is on the cytoplasmic side.

This sequence belongs to the G-protein coupled receptor T2R family. In terms of tissue distribution, expressed in subsets of taste receptor cells of the tongue and exclusively in gustducin-positive cells. Expressed in airway epithelia.

It is found in the membrane. It localises to the cell projection. The protein resides in the cilium membrane. Functionally, gustducin-coupled receptor immplicated in the perception of bitter compounds in the oral cavity and the gastrointestinal tract. Signals through PLCB2 and the calcium-regulated cation channel TRPM5. Activated by the sulfonyl amide sweeteners saccharin and acesulfame K. In airway epithelial cells, binding of bitter compounds increases the intracellular calcium ion concentration and stimulates ciliary beat frequency. May act as chemosensory receptors in airway epithelial cells to detect and eliminate potential noxious agents from the airways. In Homo sapiens (Human), this protein is Taste receptor type 2 member 43 (TAS2R43).